We begin with the raw amino-acid sequence, 509 residues long: CDK5RAP3 protein homolog (509 aa).

This sequence belongs to the CDK5RAP3 family.

Its subcellular location is the nucleus. The protein resides in the cytoplasm. Its function is as follows. Substrate adapter of E3 ligase complexes mediating ufmylation, the covalent attachment of the ubiquitin-like modifier UFM1 to substrate proteins, and which is involved in various processes, such as ribosome recycling and reticulophagy (also called ER-phagy). The sequence is that of CDK5RAP3 protein homolog from Drosophila melanogaster (Fruit fly).